The primary structure comprises 179 residues: Large ribosomal subunit protein uL5 (179 aa).

Belongs to the universal ribosomal protein uL5 family. As to quaternary structure, part of the 50S ribosomal subunit; part of the 5S rRNA/L5/L18/L25 subcomplex. Contacts the 5S rRNA and the P site tRNA. Forms a bridge to the 30S subunit in the 70S ribosome.

This is one of the proteins that bind and probably mediate the attachment of the 5S RNA into the large ribosomal subunit, where it forms part of the central protuberance. In the 70S ribosome it contacts protein S13 of the 30S subunit (bridge B1b), connecting the 2 subunits; this bridge is implicated in subunit movement. Contacts the P site tRNA; the 5S rRNA and some of its associated proteins might help stabilize positioning of ribosome-bound tRNAs. In Bacillus velezensis (strain DSM 23117 / BGSC 10A6 / LMG 26770 / FZB42) (Bacillus amyloliquefaciens subsp. plantarum), this protein is Large ribosomal subunit protein uL5.